The sequence spans 245 residues: Chloride intracellular channel protein 2 (245 aa).

Residues 1–96 (MASLALNTQA…EEFLEKTLAP (96 aa)) are required for insertion into the membrane. Position 25 (Glu25) interacts with glutathione. Residues 30–33 (CPFC) carry the G-site motif. Cys30 and Cys33 form a disulfide bridge. The chain crosses the membrane as a helical span at residues 32–52 (FCQRLFMILWLKGVKFNVTTI). Residues 76 to 239 (NKELKTDFIK…PEDKEIENTY (164 aa)) enclose the GST C-terminal domain. His227 contributes to the glutathione binding site.

It belongs to the chloride channel CLIC family. Monomer. Interacts with TRAPPC2 and RYR2.

It localises to the cytoplasm. It is found in the membrane. It catalyses the reaction chloride(in) = chloride(out). The enzyme catalyses tert-butyl hydroperoxide + 2 glutathione = tert-butanol + glutathione disulfide + H2O. It carries out the reaction cumene hydroperoxide + 2 glutathione = 2-phenylpropan-2-ol + glutathione disulfide + H2O. Its function is as follows. In the soluble state, catalyzes glutaredoxin-like thiol disulfide exchange reactions with reduced glutathione as electron donor. Displays weak glutathione peroxidase activity. Can insert into membranes and form chloride ion channels. Membrane insertion seems to be redox-regulated and may occur only under oxidizing conditions. Modulates the activity of RYR2 and inhibits calcium influx. The sequence is that of Chloride intracellular channel protein 2 from Rattus norvegicus (Rat).